Reading from the N-terminus, the 1005-residue chain is uncharacterized protein (1005 aa).

The first 24 residues, Met1–Ala24, serve as a signal peptide directing secretion. Cys25 is lipidated: N-palmitoyl cysteine. Cys25 is lipidated: S-diacylglycerol cysteine. Disordered stretches follow at residues Lys105 to Phe165 and Thr786 to Val825. 2 stretches are compositionally biased toward low complexity: residues Thr110–Ser131 and Gln145–Ser156. Over residues Thr786–Val801 the composition is skewed to polar residues.

The protein localises to the cell membrane. This is an uncharacterized protein from Mycoplasma pneumoniae (strain ATCC 29342 / M129 / Subtype 1) (Mycoplasmoides pneumoniae).